An 818-amino-acid polypeptide reads, in one-letter code: MYNNSNSNNNNGSRKRSSPPLYINNNNSGNYISPPSPLSPKQTNNFLFNNGGFNSFENPQQQSPPQQQQLLFTSPIPTRPQNLYQYIDENELNTGYNNSNNNNNNNNNNNNNNNNNNNNNNNNSNNNNNSNNNNNNKMITTTTTTTTKSNNDYKKKIKKQINFKLDNLHESSEEEEEEQQEEEEEEEEKEELNYINNNNNKNDDDNNSQDEDKEEDKYHETNTDFGLLSVASKEDLMICLNVLKKEMGQFKNLSQNLLSRLQILENGIGQEKMIRLLNNNNNYNMNGSSDSSDSSNSSGHSRNNSDENMIDCYYVTRNNNNNNTNSLLIPPAPPQLQQQQQQQQFYSQDAVMISTYLLEVQKIVEKQRQYDSLLAQREKYWDIELNKITMAILNKLGPNPSTTVDLLNLPMNNMNINKNNNSNNNNNNNNHNYNKNNNNNNNNNNDFSNFNNDDCFYNSNNSCNSEDFDSFTALNNINNSIIRNQSSNSLNLKDDSEETNFNSLKSKTNNIFKRFYIYLFGTKKTITFWKKVAIIAIIVIVWPLIANLTYKFIVYLINKRRLAKTQPFIIGNNNTSNYNSSTAIGKSLKPIKSSILVPSSSSLPSSSSSSSSTSSSSNLLLPSSINNGTNAFKKIKSSLMKKNSDISSGVGNVVSSVASNVVGGSGSGVGAPDFVKAFIQGVSTGDGGSNDNLTNNALSSITNTFGNLNTVANSSIAPSIGSGLIGSSISPSSSSSSSSSANTASNIINNFTPSALSQLNLPGSSSSSSSFSNPVSSIANNFMSDSNRSPSSSSSSSSSTSDSENGMLKLVRNLLTHR.

Composition is skewed to low complexity over residues 1 to 33, 44 to 68, and 97 to 150; these read MYNNSNSNNNNGSRKRSSPPLYINNNNSGNYIS, NNFLFNNGGFNSFENPQQQSPPQQQ, and NNSN…TKSN. 5 disordered regions span residues 1 to 68, 92 to 150, 164 to 220, 284 to 306, and 415 to 445; these read MYNN…PQQQ, LNTG…TKSN, KLDN…KYHE, NMNGSSDSSDSSNSSGHSRNNSD, and NINKNNNSNNNNNNNNHNYNKNNNNNNNNNN. 2 stretches are compositionally biased toward acidic residues: residues 172–190 and 205–214; these read SEEEEEEQQEEEEEEEEKE and DNNSQDEDKE. The span at 284–302 shows a compositional bias: low complexity; sequence NMNGSSDSSDSSNSSGHSR. A helical transmembrane segment spans residues 534–554; that stretch reads IIAIIVIVWPLIANLTYKFIV. Positions 779–808 are disordered; sequence ANNFMSDSNRSPSSSSSSSSSTSDSENGML. The segment covering 784 to 803 has biased composition (low complexity); it reads SDSNRSPSSSSSSSSSTSDS.

Its subcellular location is the membrane. This is an uncharacterized protein from Dictyostelium discoideum (Social amoeba).